The chain runs to 227 residues: Cytochrome c oxidase subunit 2 (227 aa).

Over 1–14 (MAYPFQLGLQDATS) the chain is Mitochondrial intermembrane. Residues 15–45 (PIMEELTNFHDHTLMIVFLISSLVLYIISLM) form a helical membrane-spanning segment. Topologically, residues 46–59 (LTTKLTHTSTMDAQ) are mitochondrial matrix. The chain crosses the membrane as a helical span at residues 60 to 87 (EVETIWTILPAAILVLIALPSLRILYMM). The Mitochondrial intermembrane portion of the chain corresponds to 88 to 227 (DEINNPALTV…YFENWSASMI (140 aa)). The Cu cation site is built by H161, C196, E198, C200, H204, and M207. E198 lines the Mg(2+) pocket. Y218 carries the phosphotyrosine modification.

It belongs to the cytochrome c oxidase subunit 2 family. Component of the cytochrome c oxidase (complex IV, CIV), a multisubunit enzyme composed of 14 subunits. The complex is composed of a catalytic core of 3 subunits MT-CO1, MT-CO2 and MT-CO3, encoded in the mitochondrial DNA, and 11 supernumerary subunits COX4I, COX5A, COX5B, COX6A, COX6B, COX6C, COX7A, COX7B, COX7C, COX8 and NDUFA4, which are encoded in the nuclear genome. The complex exists as a monomer or a dimer and forms supercomplexes (SCs) in the inner mitochondrial membrane with NADH-ubiquinone oxidoreductase (complex I, CI) and ubiquinol-cytochrome c oxidoreductase (cytochrome b-c1 complex, complex III, CIII), resulting in different assemblies (supercomplex SCI(1)III(2)IV(1) and megacomplex MCI(2)III(2)IV(2)). Found in a complex with TMEM177, COA6, COX18, COX20, SCO1 and SCO2. Interacts with TMEM177 in a COX20-dependent manner. Interacts with COX20. Interacts with COX16. It depends on Cu cation as a cofactor.

The protein localises to the mitochondrion inner membrane. The enzyme catalyses 4 Fe(II)-[cytochrome c] + O2 + 8 H(+)(in) = 4 Fe(III)-[cytochrome c] + 2 H2O + 4 H(+)(out). In terms of biological role, component of the cytochrome c oxidase, the last enzyme in the mitochondrial electron transport chain which drives oxidative phosphorylation. The respiratory chain contains 3 multisubunit complexes succinate dehydrogenase (complex II, CII), ubiquinol-cytochrome c oxidoreductase (cytochrome b-c1 complex, complex III, CIII) and cytochrome c oxidase (complex IV, CIV), that cooperate to transfer electrons derived from NADH and succinate to molecular oxygen, creating an electrochemical gradient over the inner membrane that drives transmembrane transport and the ATP synthase. Cytochrome c oxidase is the component of the respiratory chain that catalyzes the reduction of oxygen to water. Electrons originating from reduced cytochrome c in the intermembrane space (IMS) are transferred via the dinuclear copper A center (CU(A)) of subunit 2 and heme A of subunit 1 to the active site in subunit 1, a binuclear center (BNC) formed by heme A3 and copper B (CU(B)). The BNC reduces molecular oxygen to 2 water molecules using 4 electrons from cytochrome c in the IMS and 4 protons from the mitochondrial matrix. This is Cytochrome c oxidase subunit 2 (MT-CO2) from Rhabdomys pumilio (Four-striped grass mouse).